The primary structure comprises 185 residues: ATP synthase subunit b, chloroplastic (185 aa).

A helical transmembrane segment spans residues 31–53; sequence IINITVVLGILIYFGKGVLSNLL.

Belongs to the ATPase B chain family. As to quaternary structure, F-type ATPases have 2 components, F(1) - the catalytic core - and F(0) - the membrane proton channel. F(1) has five subunits: alpha(3), beta(3), gamma(1), delta(1), epsilon(1). F(0) has four main subunits: a(1), b(1), b'(1) and c(10-14). The alpha and beta chains form an alternating ring which encloses part of the gamma chain. F(1) is attached to F(0) by a central stalk formed by the gamma and epsilon chains, while a peripheral stalk is formed by the delta, b and b' chains.

The protein localises to the plastid. It localises to the chloroplast thylakoid membrane. Its function is as follows. F(1)F(0) ATP synthase produces ATP from ADP in the presence of a proton or sodium gradient. F-type ATPases consist of two structural domains, F(1) containing the extramembraneous catalytic core and F(0) containing the membrane proton channel, linked together by a central stalk and a peripheral stalk. During catalysis, ATP synthesis in the catalytic domain of F(1) is coupled via a rotary mechanism of the central stalk subunits to proton translocation. In terms of biological role, component of the F(0) channel, it forms part of the peripheral stalk, linking F(1) to F(0). This Gnetum parvifolium (Small-leaved jointfir) protein is ATP synthase subunit b, chloroplastic.